The following is a 1029-amino-acid chain: Multidrug resistance protein MdtC (1029 aa).

A run of 11 helical transmembrane segments spans residues 15 to 35 (ILLS…LPVA), 333 to 353 (EVEQ…FLFL), 360 to 380 (LIPA…MYLC), 387 to 407 (LSLM…IVAL), 431 to 451 (VGFT…PLLL), 469 to 489 (VAIG…CGWL), 528 to 548 (LVGL…ISIP), 853 to 873 (VILI…LYES), 897 to 917 (AFDA…IGIV), 953 to 973 (PIMM…IASG), and 984 to 1004 (ITIV…TPVV).

Belongs to the resistance-nodulation-cell division (RND) (TC 2.A.6) family. MdtC subfamily. In terms of assembly, part of a tripartite efflux system composed of MdtA, MdtB and MdtC. MdtC forms a heteromultimer with MdtB.

It is found in the cell inner membrane. This Cronobacter sakazakii (strain ATCC BAA-894) (Enterobacter sakazakii) protein is Multidrug resistance protein MdtC.